A 1450-amino-acid polypeptide reads, in one-letter code: ABC transporter G family member 37 (1450 aa).

An ABC transporter 1 domain is found at 158-431; the sequence is GNALHILPNK…FEFMGFRCPA (274 aa). 191-198 serves as a coordination point for ATP; sequence GPPGSGKT. In terms of domain architecture, ABC transmembrane type-2 1 spans 509–721; it reads ELLKATIDRE…AQNAISTNEF (213 aa). The next 6 helical transmembrane spans lie at 527–547, 559–579, 614–634, 646–666, 670–690, and 756–776; these read FMYI…MTTF, GMIY…NGFA, IPIT…VIGF, LLLL…AGIG, VVSH…GGFI, and IGLG…TVAL. An ABC transporter 2 domain is found at 852–1104; it reads ISFNDVRYSV…KLIEYFEGID (253 aa). 897–904 contributes to the ATP binding site; it reads GVSGAGKT. The ABC transmembrane type-2 2 domain maps to 1177–1391; it reads TQCLACLWKQ…TLYGLVASQF (215 aa). 7 consecutive transmembrane segments (helical) span residues 1198–1218, 1236–1256, 1284–1304, 1311–1331, 1341–1361, 1372–1392, and 1422–1442; these read AVRL…FWNL, YAAV…VVVV, LPYI…MIGF, FLWY…YGMM, IAAI…GYLI, WYCW…SQFG, and VVAV…SFAI.

The protein belongs to the ABC transporter superfamily. ABCG family. PDR (TC 3.A.1.205) subfamily.

The protein localises to the membrane. Its function is as follows. May be a general defense protein. The protein is ABC transporter G family member 37 of Oryza sativa subsp. japonica (Rice).